The sequence spans 416 residues: Subtilisin-like protease 12 (416 aa).

The first 19 residues, 1 to 19, serve as a signal peptide directing secretion; that stretch reads MSILKMMLIYFAIFWVVNA. Residues 20–116 constitute a propeptide that is removed on maturation; sequence AQLLDIDSQG…VEPNKEMQVA (97 aa). The region spanning 35-115 is the Inhibitor I9 domain; the sequence is YIVVMKDRVS…FVEPNKEMQV (81 aa). N-linked (GlcNAc...) asparagine glycans are attached at residues N123, N136, and N150. Positions 125-416 constitute a Peptidase S8 domain; it reads TWGLSRISHK…NKLLYNGSGA (292 aa). Active-site charge relay system residues include D157 and H188. N-linked (GlcNAc...) asparagine glycans are attached at residues N249, N305, N334, and N353. The active-site Charge relay system is S362. Residues N404 and N412 are each glycosylated (N-linked (GlcNAc...) asparagine).

This sequence belongs to the peptidase S8 family.

Its subcellular location is the secreted. Secreted subtilisin-like serine protease with keratinolytic activity that contributes to pathogenicity. The chain is Subtilisin-like protease 12 (SUB12) from Arthroderma benhamiae (strain ATCC MYA-4681 / CBS 112371) (Trichophyton mentagrophytes).